A 463-amino-acid polypeptide reads, in one-letter code: ATP-dependent protease ATPase subunit HslU (463 aa).

ATP-binding positions include isoleucine 19, 61 to 66 (GVGKTE), aspartate 277, glutamate 341, and arginine 413.

This sequence belongs to the ClpX chaperone family. HslU subfamily. A double ring-shaped homohexamer of HslV is capped on each side by a ring-shaped HslU homohexamer. The assembly of the HslU/HslV complex is dependent on binding of ATP.

The protein resides in the cytoplasm. Its function is as follows. ATPase subunit of a proteasome-like degradation complex; this subunit has chaperone activity. The binding of ATP and its subsequent hydrolysis by HslU are essential for unfolding of protein substrates subsequently hydrolyzed by HslV. HslU recognizes the N-terminal part of its protein substrates and unfolds these before they are guided to HslV for hydrolysis. In Bacillus cereus (strain ATCC 14579 / DSM 31 / CCUG 7414 / JCM 2152 / NBRC 15305 / NCIMB 9373 / NCTC 2599 / NRRL B-3711), this protein is ATP-dependent protease ATPase subunit HslU.